A 115-amino-acid polypeptide reads, in one-letter code: MNMMLILLMNIALAAILISLAFWLPHLNVYTEKANPYECGFDPMSSARLPFSMKFFLVAITFLLFDLEIALLLPLPWAMQFPNMNMLMTMAFILITILALGLAYEWTQKGLEWTE.

Helical transmembrane passes span 4–24 (MLIL…AFWL), 55–75 (FFLV…LLPL), and 86–106 (MLMT…AYEW).

This sequence belongs to the complex I subunit 3 family. As to quaternary structure, core subunit of respiratory chain NADH dehydrogenase (Complex I) which is composed of 45 different subunits. Interacts with TMEM186. Interacts with TMEM242.

The protein localises to the mitochondrion inner membrane. It catalyses the reaction a ubiquinone + NADH + 5 H(+)(in) = a ubiquinol + NAD(+) + 4 H(+)(out). Functionally, core subunit of the mitochondrial membrane respiratory chain NADH dehydrogenase (Complex I) which catalyzes electron transfer from NADH through the respiratory chain, using ubiquinone as an electron acceptor. Essential for the catalytic activity of complex I. The protein is NADH-ubiquinone oxidoreductase chain 3 of Microtus pennsylvanicus (Meadow vole).